The sequence spans 807 residues: Glycerol-3-phosphate acyltransferase (807 aa).

Positions 308 to 313 (CHRSHM) match the HXXXXD motif motif.

This sequence belongs to the GPAT/DAPAT family.

The protein resides in the cell inner membrane. It catalyses the reaction sn-glycerol 3-phosphate + an acyl-CoA = a 1-acyl-sn-glycero-3-phosphate + CoA. The protein operates within phospholipid metabolism; CDP-diacylglycerol biosynthesis; CDP-diacylglycerol from sn-glycerol 3-phosphate: step 1/3. This chain is Glycerol-3-phosphate acyltransferase, found in Shewanella denitrificans (strain OS217 / ATCC BAA-1090 / DSM 15013).